We begin with the raw amino-acid sequence, 311 residues long: tRNA dimethylallyltransferase (311 aa).

Position 10-17 (10-17 (GPTAVGKT)) interacts with ATP. 12-17 (TAVGKT) lines the substrate pocket. The segment at 35-38 (DSMQ) is interaction with substrate tRNA.

It belongs to the IPP transferase family. In terms of assembly, monomer. Requires Mg(2+) as cofactor.

The catalysed reaction is adenosine(37) in tRNA + dimethylallyl diphosphate = N(6)-dimethylallyladenosine(37) in tRNA + diphosphate. Functionally, catalyzes the transfer of a dimethylallyl group onto the adenine at position 37 in tRNAs that read codons beginning with uridine, leading to the formation of N6-(dimethylallyl)adenosine (i(6)A). The sequence is that of tRNA dimethylallyltransferase from Anoxybacillus flavithermus (strain DSM 21510 / WK1).